Consider the following 218-residue polypeptide: Peptidase E (218 aa).

Catalysis depends on charge relay system residues Ser-123, Asp-138, and His-160.

Belongs to the peptidase S51 family.

The protein resides in the cytoplasm. It catalyses the reaction Dipeptidase E catalyzes the hydrolysis of dipeptides Asp-|-Xaa. It does not act on peptides with N-terminal Glu, Asn or Gln, nor does it cleave isoaspartyl peptides.. Hydrolyzes dipeptides containing N-terminal aspartate residues. May play a role in allowing the cell to use peptide aspartate to spare carbon otherwise required for the synthesis of the aspartate family of amino acids. This is Peptidase E from Haemophilus influenzae (strain ATCC 51907 / DSM 11121 / KW20 / Rd).